Consider the following 311-residue polypeptide: Aspartate carbamoyltransferase catalytic subunit (311 aa).

Positions 59 and 60 each coordinate carbamoyl phosphate. Lys87 contributes to the L-aspartate binding site. Residues Arg109, His139, and Gln142 each contribute to the carbamoyl phosphate site. The L-aspartate site is built by Arg172 and Arg224. 2 residues coordinate carbamoyl phosphate: Ala265 and Pro266.

This sequence belongs to the aspartate/ornithine carbamoyltransferase superfamily. ATCase family. In terms of assembly, heterododecamer (2C3:3R2) of six catalytic PyrB chains organized as two trimers (C3), and six regulatory PyrI chains organized as three dimers (R2).

It catalyses the reaction carbamoyl phosphate + L-aspartate = N-carbamoyl-L-aspartate + phosphate + H(+). It participates in pyrimidine metabolism; UMP biosynthesis via de novo pathway; (S)-dihydroorotate from bicarbonate: step 2/3. In terms of biological role, catalyzes the condensation of carbamoyl phosphate and aspartate to form carbamoyl aspartate and inorganic phosphate, the committed step in the de novo pyrimidine nucleotide biosynthesis pathway. The chain is Aspartate carbamoyltransferase catalytic subunit from Streptococcus pyogenes serotype M12 (strain MGAS2096).